The primary structure comprises 440 residues: 26S proteasome regulatory subunit 4 (440 aa).

A compositionally biased stretch (gly residues) spans 1–13 (MGQSQSGGHGPGG). The disordered stretch occupies residues 1–49 (MGQSQSGGHGPGGGKKDDKDKKKKYEPPVPTRVGKKKKKTKGPDAASKL). The N-myristoyl glycine moiety is linked to residue G2. A Phosphoserine modification is found at S4. Positions 14-26 (GKKDDKDKKKKYE) are enriched in basic and acidic residues. Position 53 is a phosphothreonine (T53). Positions 84 to 104 (QMKPLEEKQEEERSKVDDLRG) are disordered. Positions 86–103 (KPLEEKQEEERSKVDDLR) are enriched in basic and acidic residues. Position 226–233 (226–233 (GPPGTGKT)) interacts with ATP. K237 participates in a covalent cross-link: Glycyl lysine isopeptide (Lys-Gly) (interchain with G-Cter in ubiquitin). At K258 the chain carries N6-acetyllysine. T434 bears the Phosphothreonine mark. Y439 carries the post-translational modification Phosphotyrosine.

Belongs to the AAA ATPase family. In terms of assembly, component of the 19S proteasome regulatory particle complex. The 26S proteasome consists of a 20S core particle (CP) and two 19S regulatory subunits (RP). The regulatory particle is made of a lid composed of 9 subunits, a base containing 6 ATPases including PSMC1 and few additional components. Interacts with SCA7. Interacts with NGLY1. Interacts with PAAF1.

It is found in the cytoplasm. The protein resides in the nucleus. It localises to the membrane. In terms of biological role, component of the 26S proteasome, a multiprotein complex involved in the ATP-dependent degradation of ubiquitinated proteins. This complex plays a key role in the maintenance of protein homeostasis by removing misfolded or damaged proteins, which could impair cellular functions, and by removing proteins whose functions are no longer required. Therefore, the proteasome participates in numerous cellular processes, including cell cycle progression, apoptosis, or DNA damage repair. PSMC1 belongs to the heterohexameric ring of AAA (ATPases associated with diverse cellular activities) proteins that unfolds ubiquitinated target proteins that are concurrently translocated into a proteolytic chamber and degraded into peptides. This Homo sapiens (Human) protein is 26S proteasome regulatory subunit 4 (PSMC1).